The sequence spans 266 residues: Glucosamine-6-phosphate deaminase (266 aa).

Asp72 (proton acceptor; for enolization step) is an active-site residue. Asp141 (for ring-opening step) is an active-site residue. Residue His143 is the Proton acceptor; for ring-opening step of the active site. Residue Glu148 is the For ring-opening step of the active site.

Belongs to the glucosamine/galactosamine-6-phosphate isomerase family. NagB subfamily. As to quaternary structure, homohexamer.

The enzyme catalyses alpha-D-glucosamine 6-phosphate + H2O = beta-D-fructose 6-phosphate + NH4(+). The protein operates within amino-sugar metabolism; N-acetylneuraminate degradation; D-fructose 6-phosphate from N-acetylneuraminate: step 5/5. With respect to regulation, allosterically activated by N-acetylglucosamine 6-phosphate (GlcNAc6P). Its function is as follows. Catalyzes the reversible isomerization-deamination of glucosamine 6-phosphate (GlcN6P) to form fructose 6-phosphate (Fru6P) and ammonium ion. This is Glucosamine-6-phosphate deaminase from Serratia proteamaculans (strain 568).